The primary structure comprises 186 residues: ADP-ribosylation factor-like protein 8B (186 aa).

At methionine 1 the chain carries N-acetylmethionine. Residues 1 to 19 (MLALISRLLDWFRSLFWKE) constitute an intramembrane region (note=Mediates targeting to membranes). GTP-binding positions include 29-35 (QYSGKTT), 71-75 (DIGGQ), and 130-133 (NKRD). Lysine 141 is covalently cross-linked (Glycyl lysine isopeptide (Lys-Gly) (interchain with G-Cter in ubiquitin)).

Belongs to the small GTPase superfamily. Arf family. Interacts with tubulin. Interacts with BORCS5; recruits ARL8B to lysosomes. Interacts with VPS41; the interaction mediates the recruitment of the HOPS complex to lysosomes. Interacts (GTP-bound form) with PLEKHM2 (via RUN domain); the interaction is required to recruit the motor protein kinesin-1 on lysosomes. Interacts (GTP-bound form) with PLEKHM1 (via RUN domain); the interaction is required for PLEKHM1 localization to lysosomes and for ARL8B function in delivery and degradation of endocytic and autophagic cargo in lysosomes. PLEKHM1 and PLEKHM2 compete for interaction with ARL8B. Interacts (GTP-bound form) with RUFY1; the interaction is required for RUFY1 endosomal location. When GTP-bound, interacts with RUFY3 and RUFY4, but not with RUFY1, nor RUFY2. Post-translationally, ubiquitinated at Lys-141 by RNF167, leading to its degradation. Ubiquitously expressed.

It localises to the late endosome membrane. Its subcellular location is the lysosome membrane. The protein resides in the cytoplasm. It is found in the cytoskeleton. The protein localises to the spindle. It localises to the cell projection. Its subcellular location is the axon. The protein resides in the synapse. It is found in the cytolytic granule membrane. The protein localises to the early endosome membrane. The catalysed reaction is GTP + H2O = GDP + phosphate + H(+). Functionally, small GTPase which cycles between active GTP-bound and inactive GDP-bound states. In its active state, binds to a variety of effector proteins playing a key role in the regulation of lysosomal positioning which is important for nutrient sensing, natural killer cell-mediated cytotoxicity and antigen presentation. Along with its effectors, orchestrates lysosomal transport and fusion. Localizes specifically to lysosomal membranes and mediates anterograde lysosomal motility by recruiting PLEKHM2, which in turn recruits the motor protein kinesin-1 on lysosomes. Required for lysosomal and cytolytic granule exocytosis. Critical factor involved in NK cell-mediated cytotoxicity. Drives the polarization of cytolytic granules and microtubule-organizing centers (MTOCs) toward the immune synapse between effector NK lymphocytes and target cells. In neurons, mediates the anterograde axonal long-range transport of presynaptic lysosome-related vesicles required for presynaptic biogenesis and synaptic function. Also acts as a regulator of endosome to lysosome trafficking pathways of special significance for host defense. Recruits RUFY1 onto early endosomes regulating endosomes to trans-Golgi network proteins retrieval. Regulates cargo trafficking to lysosomes by binding to PLEKHM1 and recruiting the HOPS subunit VPS41, resulting in functional assembly of the HOPS complex on lysosomal membranes. Plays an important role in cargo delivery to lysosomes for antigen presentation and microbial killing. Directs the intersection of CD1d with lipid antigens in lysosomes, and plays a role in intersecting phagosomes with lysosomes to generate phagolysosomes that kill microbes. Involved in the process of MHC II presentation. Regulates the delivery of antigens to lysosomes and the formation of MHC II-peptide complexes through the recruitment of the HOPS complex to lysosomes allowing the fusion of late endosomes to lysosomes. May play a role in chromosome segregation. In terms of biological role, (Microbial infection) During Mycobacterium tuberculosis (Mtb) infection, is required for plasma membrane repair by controlling the exocytosis of lysosomes in macrophages. ARL8B secretion pathway is crucial to control the type of cell death of the M.tuberculosis-infected macrophages, distinguishing avirulent from virulent Mtb induced necrotic cell death. (Microbial infection) During infection, coronaviruses such as SARS-CoV-2 and the chaperone HSPA5/GRP78 are probably co-released through ARL8B-dependent lysosomal exocytic pathway for unconventional egress. This chain is ADP-ribosylation factor-like protein 8B, found in Homo sapiens (Human).